The sequence spans 319 residues: Dehydrogenase/reductase SDR family member 9 (319 aa).

The first 17 residues, 1-17 (MLFWLLVLLILCGFLWN), serve as a signal peptide directing secretion. NAD(+)-binding positions include 34–58 (ITGC…HVIA) and D83. S164 is a substrate binding site. Y176 (proton acceptor) is an active-site residue. NAD(+) is bound at residue K180.

Belongs to the short-chain dehydrogenases/reductases (SDR) family. As to quaternary structure, homotetramer.

It is found in the microsome membrane. The protein localises to the endoplasmic reticulum membrane. The enzyme catalyses 3beta-hydroxy-5alpha-pregnane-20-one + NAD(+) = 5alpha-pregnane-3,20-dione + NADH + H(+). It catalyses the reaction 17beta-hydroxy-5alpha-androstan-3-one + NAD(+) = 5alpha-androstan-3,17-dione + NADH + H(+). It carries out the reaction androsterone + NAD(+) = 5alpha-androstan-3,17-dione + NADH + H(+). The catalysed reaction is 5alpha-androstane-3alpha,17beta-diol + NAD(+) = 17beta-hydroxy-5alpha-androstan-3-one + NADH + H(+). The enzyme catalyses all-trans-retinol + NAD(+) = all-trans-retinal + NADH + H(+). It catalyses the reaction 3alpha-hydroxy-5alpha-pregnan-20-one + NAD(+) = 5alpha-pregnane-3,20-dione + NADH + H(+). In terms of biological role, 3-alpha-hydroxysteroid dehydrogenase that converts 3-alpha-tetrahydroprogesterone (allopregnanolone) to dihydroxyprogesterone and 3-alpha-androstanediol to dihydroxyprogesterone. Also plays a role in the biosynthesis of retinoic acid from retinaldehyde. Can utilize both NADH and NADPH. The chain is Dehydrogenase/reductase SDR family member 9 (DHRS9) from Bos taurus (Bovine).